Consider the following 662-residue polypeptide: Protein Aster-C (662 aa).

Residues 1 to 34 are disordered; the sequence is MEGAPTVRQVMNEGDSSLATELQEDVEENPSPTV. Positions 69-136 constitute a GRAM domain; the sequence is EEYRRQFTHL…KNITFMTKEK (68 aa). Disordered stretches follow at residues 212-237 and 250-284; these read SIEDVRPRSPGRSSLDDSGERDEKLS and VSETESFDGNSSKGGLGKEESQNEKQTKKSLLPTL. Over residues 265–276 the composition is skewed to basic and acidic residues; sequence LGKEESQNEKQT. The VASt domain maps to 326–497; sequence HGRLFINRIF…DLLIEESILN (172 aa). A helical membrane pass occupies residues 557-577; sequence LIVVMSIFVLLLVLLNVTLFL.

It is found in the endoplasmic reticulum membrane. The protein resides in the cell membrane. Functionally, cholesterol transporter that mediates non-vesicular transport of cholesterol from the plasma membrane (PM) to the endoplasmic reticulum (ER). Contains unique domains for binding cholesterol and the PM, thereby serving as a molecular bridge for the transfer of cholesterol from the PM to the ER. Plays a crucial role in cholesterol homeostasis and has the unique ability to localize to the PM based on the level of membrane cholesterol. In lipid-poor conditions localizes to the ER membrane and in response to excess cholesterol in the PM is recruited to the endoplasmic reticulum-plasma membrane contact sites (EPCS) which is mediated by the GRAM domain. At the EPCS, the sterol-binding VASt/ASTER domain binds to the cholesterol in the PM and facilitates its transfer from the PM to ER. This Pongo abelii (Sumatran orangutan) protein is Protein Aster-C (GRAMD1C).